A 780-amino-acid polypeptide reads, in one-letter code: Ribonucleoside-diphosphate reductase large subunit (780 aa).

Substrate contacts are provided by residues Thr177, Ser192–Cys193, Gly223, Asn393–Glu397, and Pro595–Ser599. The cysteines at positions 193 and 409 are disulfide-linked. Asn393 (proton acceptor) is an active-site residue. Cys395 serves as the catalytic Cysteine radical intermediate. Glu397 (proton acceptor) is an active-site residue.

Belongs to the ribonucleoside diphosphate reductase large chain family. Heterotetramer composed of a homodimer of the large subunit (R1) and a homodimer of the small subunit (R2). Larger multisubunit protein complex are also active, composed of (R1)n(R2)n.

It carries out the reaction a 2'-deoxyribonucleoside 5'-diphosphate + [thioredoxin]-disulfide + H2O = a ribonucleoside 5'-diphosphate + [thioredoxin]-dithiol. Functionally, ribonucleoside-diphosphate reductase holoenzyme provides the precursors necessary for viral DNA synthesis. Allows virus growth in non-dividing cells, as well as reactivation from latency in infected hosts. Catalyzes the biosynthesis of deoxyribonucleotides from the corresponding ribonucleotides. The sequence is that of Ribonucleoside-diphosphate reductase large subunit from Connochaetes taurinus (Blue wildebeest).